Consider the following 940-residue polypeptide: UvrABC system protein A (940 aa).

31-38 (GLSGSGKS) provides a ligand contact to ATP. Residues 252-279 (CPQCGYSMQELEPRLFSFNNPAGACGTC) form a C4-type zinc finger. ABC transporter domains are found at residues 309 to 586 (WDQK…PNSL) and 606 to 936 (RDPK…RFLK). 639–646 (GVSGSGKS) is a binding site for ATP. The C4-type zinc-finger motif lies at 739–765 (CEACQGDGVIKVEMHFLPDVYVPCDVC).

The protein belongs to the ABC transporter superfamily. UvrA family. In terms of assembly, forms a heterotetramer with UvrB during the search for lesions.

Its subcellular location is the cytoplasm. Functionally, the UvrABC repair system catalyzes the recognition and processing of DNA lesions. UvrA is an ATPase and a DNA-binding protein. A damage recognition complex composed of 2 UvrA and 2 UvrB subunits scans DNA for abnormalities. When the presence of a lesion has been verified by UvrB, the UvrA molecules dissociate. The chain is UvrABC system protein A from Vibrio parahaemolyticus serotype O3:K6 (strain RIMD 2210633).